The sequence spans 476 residues: Glycogen synthase (476 aa).

Lysine 15 serves as a coordination point for ADP-alpha-D-glucose.

It belongs to the glycosyltransferase 1 family. Bacterial/plant glycogen synthase subfamily.

It catalyses the reaction [(1-&gt;4)-alpha-D-glucosyl](n) + ADP-alpha-D-glucose = [(1-&gt;4)-alpha-D-glucosyl](n+1) + ADP + H(+). It functions in the pathway glycan biosynthesis; glycogen biosynthesis. Synthesizes alpha-1,4-glucan chains using ADP-glucose. The chain is Glycogen synthase from Yersinia pseudotuberculosis serotype O:1b (strain IP 31758).